The chain runs to 442 residues: tRNA-2-methylthio-N(6)-dimethylallyladenosine synthase (442 aa).

The 116-residue stretch at 2 to 117 (QGLYIKSYGC…LPELIIKARR (116 aa)) folds into the MTTase N-terminal domain. [4Fe-4S] cluster contacts are provided by C11, C47, C80, C157, C161, and C164. The Radical SAM core domain occupies 143 to 374 (KNQEVSAFIS…QELLREQQLA (232 aa)). Residues 377–442 (RNMIGQTCSV…QNSVTGIVVN (66 aa)) form the TRAM domain.

The protein belongs to the methylthiotransferase family. MiaB subfamily. Monomer. The cofactor is [4Fe-4S] cluster.

The protein localises to the cytoplasm. It carries out the reaction N(6)-dimethylallyladenosine(37) in tRNA + (sulfur carrier)-SH + AH2 + 2 S-adenosyl-L-methionine = 2-methylsulfanyl-N(6)-dimethylallyladenosine(37) in tRNA + (sulfur carrier)-H + 5'-deoxyadenosine + L-methionine + A + S-adenosyl-L-homocysteine + 2 H(+). Catalyzes the methylthiolation of N6-(dimethylallyl)adenosine (i(6)A), leading to the formation of 2-methylthio-N6-(dimethylallyl)adenosine (ms(2)i(6)A) at position 37 in tRNAs that read codons beginning with uridine. This is tRNA-2-methylthio-N(6)-dimethylallyladenosine synthase from Ehrlichia chaffeensis (strain ATCC CRL-10679 / Arkansas).